The primary structure comprises 685 residues: Bifunctional diguanylate cyclase/cyclic di-GMP phosphodiesterase MucR (685 aa).

The MHYT domain maps to 6-199; sequence YNQVLVAFSL…YTGMAAAQFP (194 aa). Helical transmembrane passes span 9–29, 44–64, 77–97, 117–137, 141–161, 175–195, and 214–234; these read VLVA…LDMA, LIGG…VGML, GLTL…LWLV, GIAA…GIVY, WLGL…WIAF, AGAA…GMAA, and GWLA…ALIV. Over 235-685 the chain is Cytoplasmic; the sequence is SVLDSRLEAR…PAEQLLASVA (451 aa). Positions 293–425 constitute a GGDEF domain; sequence RRFAVLFMDL…GRNGYCFFES (133 aa). The 252-residue stretch at 434-685 folds into the EAL domain; that stretch reads QLQLLHDLRQ…PAEQLLASVA (252 aa). Residues Gln455, Glu469, Leu472, Arg473, Asn528, and Gln533 each contribute to the 3',3'-c-di-GMP site. Glu469 contacts Mg(2+). Asn528 is a Mg(2+) binding site. The Mg(2+) site is built by Glu560, Asp590, and Asp591. Asp590 is a 3',3'-c-di-GMP binding site. Arg614 lines the 3',3'-c-di-GMP pocket. Glu647 contacts Mg(2+). Residues Glu650 and Phe669 each contribute to the 3',3'-c-di-GMP site.

In terms of assembly, homodimer. Mg(2+) is required as a cofactor.

Its subcellular location is the cell inner membrane. It catalyses the reaction 2 GTP = 3',3'-c-di-GMP + 2 diphosphate. The enzyme catalyses 3',3'-c-di-GMP + H2O = 5'-phosphoguanylyl(3'-&gt;5')guanosine + H(+). Displays both diguanylate cyclase (DGC) and c-di-GMP-specific phosphodiesterase (PDE) activity. Probably modulates DGC and PDE activities, and thus c-di-GMP levels, in a growth mode-dependent manner. May act as a PDE under planktonic growth conditions and as a DGC in biofilms. During biofilm formation, it specifically activates alginate biosynthesis via generation of a localized c-di-GMP pool in the vicinity of the alginate biosynthesis protein Alg44. This Pseudomonas aeruginosa (strain ATCC 15692 / DSM 22644 / CIP 104116 / JCM 14847 / LMG 12228 / 1C / PRS 101 / PAO1) protein is Bifunctional diguanylate cyclase/cyclic di-GMP phosphodiesterase MucR.